A 159-amino-acid polypeptide reads, in one-letter code: MMMDILMYLFETYIHSDADLQVDQDELEDELLRAGFHQQDIYKALLWLEELAALQQSDAHSAISRCSAVSSTRVYSPKEMQRLDIECRGFLLFLEQINVLTTETREMVIDRVMGLETNEFELEDLKWIILMVLFNVPGNENAYTLMEELLYTKEQGILH.

The protein belongs to the Smg family.

The chain is Protein Smg homolog from Vibrio vulnificus (strain CMCP6).